Consider the following 180-residue polypeptide: Large ribosomal subunit protein uL5 (180 aa).

Belongs to the universal ribosomal protein uL5 family. As to quaternary structure, forms a bridge to the 30S subunit in the 70S ribosome. Part of the 50S ribosomal subunit; part of the 5S rRNA/L5/L18/L25 (CTC) subcomplex. Is known to contact the 5S rRNA, 23S rRNA and the P site tRNA.

Functionally, this is one of the proteins that bind and probably mediate the attachment of the 5S RNA into the large ribosomal subunit, where it forms part of the central protuberance. In the 70S ribosome it contacts protein S13 of the 30S subunit (bridge B1b), connecting the 2 subunits; this bridge is implicated in subunit movement. Contacts the P site tRNA; the 5S rRNA and some of its associated proteins might help stabilize positioning of ribosome-bound tRNAs. The protein is Large ribosomal subunit protein uL5 (rplE) of Deinococcus radiodurans (strain ATCC 13939 / DSM 20539 / JCM 16871 / CCUG 27074 / LMG 4051 / NBRC 15346 / NCIMB 9279 / VKM B-1422 / R1).